A 133-amino-acid polypeptide reads, in one-letter code: ATP synthase epsilon chain (133 aa).

Belongs to the ATPase epsilon chain family. F-type ATPases have 2 components, CF(1) - the catalytic core - and CF(0) - the membrane proton channel. CF(1) has five subunits: alpha(3), beta(3), gamma(1), delta(1), epsilon(1). CF(0) has three main subunits: a, b and c.

Its subcellular location is the cell inner membrane. Its function is as follows. Produces ATP from ADP in the presence of a proton gradient across the membrane. This Maricaulis maris (strain MCS10) (Caulobacter maris) protein is ATP synthase epsilon chain.